The chain runs to 71 residues: uncharacterized protein (71 aa).

Residues Ile5 to Ile59 form the HTH cro/C1-type domain. The segment at residues Gln16–Lys35 is a DNA-binding region (H-T-H motif).

This is an uncharacterized protein from Archaeoglobus fulgidus (strain ATCC 49558 / DSM 4304 / JCM 9628 / NBRC 100126 / VC-16).